Reading from the N-terminus, the 406-residue chain is Cysteine desulfurase IscS (406 aa).

Pyridoxal 5'-phosphate is bound by residues 75–76 (AT), N155, Q183, and 203–205 (SSH). Residue K206 is modified to N6-(pyridoxal phosphate)lysine. Position 243 (T243) interacts with pyridoxal 5'-phosphate. Residue C330 is the Cysteine persulfide intermediate of the active site. Residue C330 participates in [2Fe-2S] cluster binding.

Belongs to the class-V pyridoxal-phosphate-dependent aminotransferase family. NifS/IscS subfamily. Homodimer. Forms a heterotetramer with IscU, interacts with other sulfur acceptors. Requires pyridoxal 5'-phosphate as cofactor.

The protein localises to the cytoplasm. It catalyses the reaction (sulfur carrier)-H + L-cysteine = (sulfur carrier)-SH + L-alanine. It functions in the pathway cofactor biosynthesis; iron-sulfur cluster biosynthesis. In terms of biological role, master enzyme that delivers sulfur to a number of partners involved in Fe-S cluster assembly, tRNA modification or cofactor biosynthesis. Catalyzes the removal of elemental sulfur atoms from cysteine to produce alanine. Functions as a sulfur delivery protein for Fe-S cluster synthesis onto IscU, an Fe-S scaffold assembly protein, as well as other S acceptor proteins. This chain is Cysteine desulfurase IscS, found in Haemophilus ducreyi (strain 35000HP / ATCC 700724).